We begin with the raw amino-acid sequence, 232 residues long: Small ribosomal subunit protein uS3 (232 aa).

The region spanning 39-107 (IRKFLKKELF…DVAINIKEEK (69 aa)) is the KH type-2 domain. The segment at 213–232 (QPEPAEEKKGGRRPSRKRGE) is disordered. Residues 222–232 (GGRRPSRKRGE) are compositionally biased toward basic residues.

This sequence belongs to the universal ribosomal protein uS3 family. In terms of assembly, part of the 30S ribosomal subunit. Forms a tight complex with proteins S10 and S14.

In terms of biological role, binds the lower part of the 30S subunit head. Binds mRNA in the 70S ribosome, positioning it for translation. The polypeptide is Small ribosomal subunit protein uS3 (Sulfurovum sp. (strain NBC37-1)).